A 174-amino-acid polypeptide reads, in one-letter code: RNA pyrophosphohydrolase (174 aa).

The 144-residue stretch at 6 to 149 (GYRPNVGIIL…KRDVYLGALK (144 aa)) folds into the Nudix hydrolase domain. Residues 38 to 59 (GGIKPGESPETAMYRELYEEVG) carry the Nudix box motif.

It belongs to the Nudix hydrolase family. RppH subfamily. A divalent metal cation serves as cofactor.

Accelerates the degradation of transcripts by removing pyrophosphate from the 5'-end of triphosphorylated RNA, leading to a more labile monophosphorylated state that can stimulate subsequent ribonuclease cleavage. The sequence is that of RNA pyrophosphohydrolase from Neisseria meningitidis serogroup C / serotype 2a (strain ATCC 700532 / DSM 15464 / FAM18).